Here is a 596-residue protein sequence, read N- to C-terminus: V-type ATP synthase alpha chain (596 aa).

233–240 (GPFGAGKT) is an ATP binding site.

It belongs to the ATPase alpha/beta chains family.

It carries out the reaction ATP + H2O + 4 H(+)(in) = ADP + phosphate + 5 H(+)(out). In terms of biological role, produces ATP from ADP in the presence of a proton gradient across the membrane. The V-type alpha chain is a catalytic subunit. The polypeptide is V-type ATP synthase alpha chain (Streptococcus gordonii (strain Challis / ATCC 35105 / BCRC 15272 / CH1 / DL1 / V288)).